We begin with the raw amino-acid sequence, 101 residues long: MGTRFLLALCLVLLVLGFEVQGAQLPQQDEPPSPALLSRVQESLSSYWESAKAAAQKLYEKTYLPAVDEKLRDLYSKSTAAMSTYTGIFTDQVLSVLKGEE.

A signal peptide spans 1-22; sequence MGTRFLLALCLVLLVLGFEVQG. The tract at residues 66-74 is lipid binding; it reads AVDEKLRDL. A lipoprotein lipase cofactor region spans residues 78-101; sequence STAAMSTYTGIFTDQVLSVLKGEE.

Belongs to the apolipoprotein C2 family. Proapolipoprotein C-II is synthesized as a sialic acid containing glycoprotein which is subsequently desialylated prior to its proteolytic processing. Post-translationally, proapolipoprotein C-II, the major form found in plasma undergoes proteolytic cleavage of its N-terminal hexapeptide to generate apolipoprotein C-II, which occurs as the minor form in plasma.

The protein localises to the secreted. In terms of biological role, component of chylomicrons, very low-density lipoproteins (VLDL), low-density lipoproteins (LDL), and high-density lipoproteins (HDL) in plasma. Plays an important role in lipoprotein metabolism as an activator of lipoprotein lipase. Both proapolipoprotein C-II and apolipoprotein C-II can activate lipoprotein lipase. In Macaca fascicularis (Crab-eating macaque), this protein is Apolipoprotein C-II (APOC2).